The primary structure comprises 288 residues: Glycine--tRNA ligase alpha subunit (288 aa).

This sequence belongs to the class-II aminoacyl-tRNA synthetase family. In terms of assembly, tetramer of two alpha and two beta subunits.

The protein localises to the cytoplasm. It carries out the reaction tRNA(Gly) + glycine + ATP = glycyl-tRNA(Gly) + AMP + diphosphate. The sequence is that of Glycine--tRNA ligase alpha subunit from Rickettsia africae (strain ESF-5).